Reading from the N-terminus, the 94-residue chain is Co-chaperonin GroES (94 aa).

It belongs to the GroES chaperonin family. Heptamer of 7 subunits arranged in a ring. Interacts with the chaperonin GroEL.

The protein resides in the cytoplasm. Functionally, together with the chaperonin GroEL, plays an essential role in assisting protein folding. The GroEL-GroES system forms a nano-cage that allows encapsulation of the non-native substrate proteins and provides a physical environment optimized to promote and accelerate protein folding. GroES binds to the apical surface of the GroEL ring, thereby capping the opening of the GroEL channel. The protein is Co-chaperonin GroES of Bacillus sp. (strain PS3).